A 396-amino-acid polypeptide reads, in one-letter code: Elongation factor Tu (396 aa).

Residues 10-206 (KPHVNVGTIG…ALDTYIPTPE (197 aa)) enclose the tr-type G domain. The interval 19–26 (GHVDHGKT) is G1. A GTP-binding site is contributed by 19 to 26 (GHVDHGKT). Mg(2+) is bound at residue threonine 26. The interval 60-64 (GITIN) is G2. The interval 81-84 (DCPG) is G3. GTP-binding positions include 81 to 85 (DCPGH) and 136 to 139 (NKAD). Residues 136-139 (NKAD) form a G4 region. Residues 174–176 (SAK) form a G5 region.

It belongs to the TRAFAC class translation factor GTPase superfamily. Classic translation factor GTPase family. EF-Tu/EF-1A subfamily. Monomer.

It localises to the cytoplasm. It carries out the reaction GTP + H2O = GDP + phosphate + H(+). Functionally, GTP hydrolase that promotes the GTP-dependent binding of aminoacyl-tRNA to the A-site of ribosomes during protein biosynthesis. This is Elongation factor Tu from Bordetella bronchiseptica (strain ATCC BAA-588 / NCTC 13252 / RB50) (Alcaligenes bronchisepticus).